The sequence spans 381 residues: Tumor necrosis factor receptor superfamily member 10B (381 aa).

An N-terminal signal peptide occupies residues 1 to 52 (MEPPGPSTPTASAAARADHYTPGLRPLPKRRLLYSFALLLAVLQAVFVPVTA). TNFR-Cys repeat units lie at residues 26–86 (PLPK…GNCK), 87–129 (PCRE…NTVC), and 130–169 (RCKP…NRKC). Residues 53–180 (NPAHNRPAGL…SKTAWASWHK (128 aa)) lie on the Extracellular side of the membrane. 7 cysteine pairs are disulfide-bonded: C74–C85, C88–C105, C108–C121, C111–C129, C131–C145, C148–C161, and C151–C169. The helical transmembrane segment at 181–201 (LGLWIGLLVPVVLLIGALLVW) threads the bilayer. Residues 202 to 381 (KTGAWRQWLL…ETGPGGSQCV (180 aa)) lie on the Cytoplasmic side of the membrane. Residues 228-260 (HSSLLDRQTSSTTNDSNHNTEPGKTQKTGKKLL) form a disordered region. Positions 236–247 (TSSTTNDSNHNT) are enriched in low complexity. In terms of domain architecture, Death spans 273-356 (KFIFEYCSDI…DAMEKIEDYA (84 aa)). A glycan ((Microbial infection) N-beta-linked (GlcNAc) arginine) is linked at R293.

In terms of assembly, monomer. Can interact with TRADD and RIPK1. Three TNFRSF10B molecules interact with the TNFSF10 homotrimer. In the absence of stimulation, interacts with BIRC2, DDX3X and GSK3B. The interaction with BIRC2 and DDX3X is further enhanced upon receptor stimulation and accompanied by DDX3X and BIRC2 cleavage. Post-translationally, (Microbial infection) Glycosylated at Arg-293 by S.typhimurium protein Ssek3. In terms of tissue distribution, highly expressed in heart, lung and kidney.

It localises to the membrane. Functionally, receptor for the cytotoxic ligand TNFSF10/TRAIL. The adapter molecule FADD recruits caspase-8 to the activated receptor. The resulting death-inducing signaling complex (DISC) performs caspase-8 proteolytic activation which initiates the subsequent cascade of caspases (aspartate-specific cysteine proteases) mediating apoptosis. Promotes the activation of NF-kappa-B. Essential for ER stress-induced apoptosis. In Mus musculus (Mouse), this protein is Tumor necrosis factor receptor superfamily member 10B (Tnfrsf10b).